The sequence spans 197 residues: Probable S-adenosylmethionine-dependent methyltransferase MJ0882 (197 aa).

Residues 63–67, D84, and N129 each bind S-adenosyl-L-methionine; that span reads GCGYG. Substrate is bound at residue 129 to 132; it reads NPPI.

This sequence belongs to the methyltransferase superfamily.

Probable methyltransferase that uses S-adenosylmethionine as the methyl donor. Binds neither NAD nor NADP in vitro. This Methanocaldococcus jannaschii (strain ATCC 43067 / DSM 2661 / JAL-1 / JCM 10045 / NBRC 100440) (Methanococcus jannaschii) protein is Probable S-adenosylmethionine-dependent methyltransferase MJ0882.